The sequence spans 469 residues: Glutamine synthetase (469 aa).

The GS beta-grasp domain maps to 12 to 97 (HDVKWVDLRF…LVCDIIEPST (86 aa)). Residues 105 to 469 (PRNIAKRAEE…PLEYDLYYSV (365 aa)) enclose the GS catalytic domain. Mg(2+) is bound by residues E130 and E132. E208 lines the ATP pocket. Residues E213 and E221 each contribute to the Mg(2+) site. L-glutamate contacts are provided by residues 265–266 (NG) and G266. H270 is a Mg(2+) binding site. Residues 272–274 (HMS) and S274 contribute to the ATP site. 3 residues coordinate L-glutamate: R322, E328, and R340. Residues R340, R345, and K353 each coordinate ATP. Mg(2+) is bound at residue E358. R360 contributes to the L-glutamate binding site. Y398 carries the post-translational modification O-AMP-tyrosine.

This sequence belongs to the glutamine synthetase family. As to quaternary structure, oligomer of 12 subunits arranged in the form of two hexameric ring. Mg(2+) is required as a cofactor.

The protein localises to the cytoplasm. It catalyses the reaction L-glutamate + NH4(+) + ATP = L-glutamine + ADP + phosphate + H(+). The activity of this enzyme could be controlled by adenylation under conditions of abundant glutamine. Its function is as follows. Catalyzes the ATP-dependent biosynthesis of glutamine from glutamate and ammonia. The protein is Glutamine synthetase of Pseudomonas aeruginosa (strain ATCC 15692 / DSM 22644 / CIP 104116 / JCM 14847 / LMG 12228 / 1C / PRS 101 / PAO1).